The following is a 119-amino-acid chain: Putative phosphoethanolamine transferase YjgX (119 aa).

2 helical membrane-spanning segments follow: residues 5 to 25 and 94 to 114; these read VFPV…VIFW and LLLS…TIPY.

The protein belongs to the phosphoethanolamine transferase family.

The protein localises to the cell inner membrane. In Escherichia coli (strain K12), this protein is Putative phosphoethanolamine transferase YjgX (yjgX).